We begin with the raw amino-acid sequence, 157 residues long: MGVFVFDDEYVSTVAPPKLYKALAKDADEIVPKVIKEAQGVEIIEGNGGPGTIKKLSILEDGKTNYVLHKLDAVDEANFGYNYSLVGGPGLHESLEKVAFETIILAGSDGGSIVKISVKYHTKGDAALSDAVRDETKAKGTGLIKAIEGYVLANPGY.

This sequence belongs to the BetVI family.

The protein is ABA-responsive protein ABR17 of Pisum sativum (Garden pea).